The sequence spans 125 residues: Prefoldin subunit beta (125 aa).

The protein belongs to the prefoldin subunit beta family. As to quaternary structure, heterohexamer of two alpha and four beta subunits.

It is found in the cytoplasm. Its function is as follows. Molecular chaperone capable of stabilizing a range of proteins. Seems to fulfill an ATP-independent, HSP70-like function in archaeal de novo protein folding. The polypeptide is Prefoldin subunit beta (Sulfolobus acidocaldarius (strain ATCC 33909 / DSM 639 / JCM 8929 / NBRC 15157 / NCIMB 11770)).